The primary structure comprises 247 residues: Pyridoxine 5'-phosphate synthase (247 aa).

Asn-9 serves as a coordination point for 3-amino-2-oxopropyl phosphate. 11–12 serves as a coordination point for 1-deoxy-D-xylulose 5-phosphate; the sequence is DH. Arg-20 contributes to the 3-amino-2-oxopropyl phosphate binding site. His-45 (proton acceptor) is an active-site residue. Residues Arg-47 and His-52 each coordinate 1-deoxy-D-xylulose 5-phosphate. Glu-72 (proton acceptor) is an active-site residue. Position 102 (Thr-102) interacts with 1-deoxy-D-xylulose 5-phosphate. His-193 (proton donor) is an active-site residue. Residues Gly-194 and 215–216 each bind 3-amino-2-oxopropyl phosphate; that span reads GH.

Belongs to the PNP synthase family. As to quaternary structure, homooctamer; tetramer of dimers.

The protein localises to the cytoplasm. It carries out the reaction 3-amino-2-oxopropyl phosphate + 1-deoxy-D-xylulose 5-phosphate = pyridoxine 5'-phosphate + phosphate + 2 H2O + H(+). It functions in the pathway cofactor biosynthesis; pyridoxine 5'-phosphate biosynthesis; pyridoxine 5'-phosphate from D-erythrose 4-phosphate: step 5/5. Functionally, catalyzes the complicated ring closure reaction between the two acyclic compounds 1-deoxy-D-xylulose-5-phosphate (DXP) and 3-amino-2-oxopropyl phosphate (1-amino-acetone-3-phosphate or AAP) to form pyridoxine 5'-phosphate (PNP) and inorganic phosphate. In Blochmanniella floridana, this protein is Pyridoxine 5'-phosphate synthase.